The chain runs to 261 residues: X-box-binding protein 1 (261 aa).

At 1-185 (MVVVAAAPNP…VQAQLSPLQN (185 aa)) the chain is on the cytoplasmic side. The disordered stretch occupies residues 44–93 (RGASPEAASGGLPQARKRQRLTHLSPEEKALRRKLKNRVAAQTARDRKKA). Phosphoserine occurs at positions 47 and 68. Residues 70–133 (EEKALRRKLK…HGLVVENQEL (64 aa)) form the bZIP domain. A basic motif region spans residues 72–94 (KALRRKLKNRVAAQTARDRKKAR). The tract at residues 75 to 92 (RRKLKNRVAAQTARDRKK) is nuclear localization signal (NLS); in isoforms 1 and isoform 2. The tract at residues 98 to 133 (LEQQVVDLEEENQKLLLENQLLREKTHGLVVENQEL) is leucine-zipper. The chain crosses the membrane as a helical; Signal-anchor for type II membrane protein span at residues 186–203 (ISPWILAVLTLQIQSLIS). Topologically, residues 204–261 (CWAFWTTWTQSCSSNALPQSLPAWRSSQRSTQKDPVPYQPPFLCQWGRHQPSWKPLMN) are lumenal. The tract at residues 235-261 (QKDPVPYQPPFLCQWGRHQPSWKPLMN) is necessary for the translational pausing of its own mRNA.

This sequence belongs to the bZIP family. In terms of assembly, isoform 2 interacts with SIRT1. Isoform 2 interacts with PIK3R1 and PIK3R2; the interactions are direct and induce translocation of XBP1 isoform 2 into the nucleus and the unfolded protein response (UPR) XBP1-dependent target genes activation in a ER stress- and/or insulin-dependent but PI3K-independent manner. Isoform 2 interacts with FOXO1; the interaction is direct and leads to FOXO1 ubiquitination and degradation via the proteasome pathway in hepatocytes. Isoform 1 interacts with HM13. Isoform 1 interacts with RNF139; the interaction induces ubiquitination and degradation of isoform 1. Isoform 1 interacts (via luminal domain) with DERL1; the interaction obviates the need for ectodomain shedding prior HM13/SPP-mediated XBP1 isoform 1 cleavage. Isoform 1 interacts with isoform 2; the interaction sequesters isoform 2 from the nucleus and enhances isoform 2 degradation in the cytoplasm. Isoform 1 interacts with HDAC3 and AKT1; the interactions occur in endothelial cell (EC) under disturbed flow. Isoform 1 interacts with the oncoprotein FOS. Isoform 2 interacts with ATF6; the interaction occurs in a ER stress-dependent manner and is required for DNA binding to the unfolded protein response element (UPRE). Isoform 2 interacts with PIK3R1; the interaction is direct and induces translocation of XBP1 isoform 2 into the nucleus and the unfolded protein response (UPR) XBP1-dependent target genes activation in a ER stress- and/or insulin-dependent but PI3K-independent manner. Post-translationally, acetylated by EP300; acetylation positively regulates the transcriptional activity of XBP1 isoform 2. Isoform 2 is deacetylated by SIRT1; deacetylation negatively regulates the transcriptional activity of XBP1 isoform 2. In terms of processing, ubiquitinated, leading to proteasome-mediated degradation in response to ER stress. X-box-binding protein 1, cytoplasmic form and luminal form are produced by intramembrane proteolytic cleavage of ER membrane-anchored isoform 1 triggered by HM13/SPP in a DERL1-RNF139-dependent and VCP/p97-independent manner. X-box-binding protein 1, luminal form is ubiquitinated leading to proteasomal degradation. In terms of tissue distribution, expressed in plasma cells in rheumatoid synovium. Over-expressed in primary breast cancer and metastatic breast cancer cells. Isoform 1 and isoform 2 are expressed at higher level in proliferating as compared to confluent quiescent endothelial cells.

Its subcellular location is the endoplasmic reticulum. The protein localises to the nucleus. The protein resides in the cytoplasm. It localises to the endoplasmic reticulum membrane. It is found in the membrane. Functionally, functions as a transcription factor during endoplasmic reticulum (ER) stress by regulating the unfolded protein response (UPR). Required for cardiac myogenesis and hepatogenesis during embryonic development, and the development of secretory tissues such as exocrine pancreas and salivary gland. Involved in terminal differentiation of B lymphocytes to plasma cells and production of immunoglobulins. Modulates the cellular response to ER stress in a PIK3R-dependent manner. Binds to the cis-acting X box present in the promoter regions of major histocompatibility complex class II genes. Involved in VEGF-induced endothelial cell (EC) proliferation and retinal blood vessel formation during embryonic development but also for angiogenesis in adult tissues under ischemic conditions. Also functions as a major regulator of the UPR in obesity-induced insulin resistance and type 2 diabetes for the management of obesity and diabetes prevention. In terms of biological role, plays a role in the unconventional cytoplasmic splicing processing of its own mRNA triggered by the endoplasmic reticulum (ER) transmembrane endoribonuclease ERN1: upon ER stress, the emerging XBP1 polypeptide chain, as part of a mRNA-ribosome-nascent chain (R-RNC) complex, cotranslationally recruits its own unprocessed mRNA through transient docking to the ER membrane and translational pausing, therefore facilitating efficient IRE1-mediated XBP1 mRNA isoform 2 production. In endothelial cells (EC), associated with KDR, promotes IRE1-mediated XBP1 mRNA isoform 2 productions in a vascular endothelial growth factor (VEGF)-dependent manner, leading to EC proliferation and angiogenesis. Functions as a negative feed-back regulator of the potent transcription factor XBP1 isoform 2 protein levels through proteasome-mediated degradation, thus preventing the constitutive activation of the ER stress response signaling pathway. Inhibits the transactivation activity of XBP1 isoform 2 in myeloma cells. Acts as a weak transcriptional factor. Together with HDAC3, contributes to the activation of NFE2L2-mediated HMOX1 transcription factor gene expression in a PI(3)K/mTORC2/Akt-dependent signaling pathway leading to EC survival under disturbed flow/oxidative stress. Binds to the ER stress response element (ERSE) upon ER stress. Binds to the consensus 5'-GATGACGTG[TG]N(3)[AT]T-3' sequence related to cAMP responsive element (CRE)-like sequences. Binds the Tax-responsive element (TRE) present in the long terminal repeat (LTR) of T-cell leukemia virus type 1 (HTLV-I) and to the TPA response elements (TRE). Associates preferentially to the HDAC3 gene promoter region in a static flow-dependent manner. Binds to the CDH5/VE-cadherin gene promoter region. Its function is as follows. Functions as a stress-inducible potent transcriptional activator during endoplasmic reticulum (ER) stress by inducing unfolded protein response (UPR) target genes via binding to the UPR element (UPRE). Up-regulates target genes encoding ER chaperones and ER-associated degradation (ERAD) components to enhance the capacity of productive folding and degradation mechanism, respectively, in order to maintain the homeostasis of the ER under ER stress. Plays a role in the production of immunoglobulins and interleukin-6 in the presence of stimuli required for plasma cell differentiation. Induces phospholipid biosynthesis and ER expansion. Contributes to the VEGF-induced endothelial cell (EC) growth and proliferation in a Akt/GSK-dependent and/or -independent signaling pathway, respectively, leading to beta-catenin nuclear translocation and E2F2 gene expression. Promotes umbilical vein EC apoptosis and atherosclerotisis development in a caspase-dependent signaling pathway, and contributes to VEGF-induced EC proliferation and angiogenesis in adult tissues under ischemic conditions. Involved in the regulation of endostatin-induced autophagy in EC through BECN1 transcriptional activation. Plays a role as an oncogene by promoting tumor progression: stimulates zinc finger protein SNAI1 transcription to induce epithelial-to-mesenchymal (EMT) transition, cell migration and invasion of breast cancer cells. Involved in adipocyte differentiation by regulating lipogenic gene expression during lactation. Plays a role in the survival of both dopaminergic neurons of the substantia nigra pars compacta (SNpc), by maintaining protein homeostasis and of myeloma cells. Increases insulin sensitivity in the liver as a response to a high carbohydrate diet, resulting in improved glucose tolerance. Also improves glucose homeostasis in an ER stress- and/or insulin-independent manner through both binding and proteasome-induced degradation of the transcription factor FOXO1, hence resulting in suppression of gluconeogenic genes expression and in a reduction of blood glucose levels. Controls the induction of de novo fatty acid synthesis in hepatocytes by regulating the expression of a subset of lipogenic genes in an ER stress- and UPR-independent manner. Associates preferentially to the HDAC3 gene promoter region in a disturbed flow-dependent manner. Binds to the BECN1 gene promoter region. Binds to the CDH5/VE-cadherin gene promoter region. Binds to the ER stress response element (ERSE) upon ER stress. Binds to the 5'-CCACG-3' motif in the PPARG promoter. This is X-box-binding protein 1 from Homo sapiens (Human).